Consider the following 538-residue polypeptide: Low affinity inorganic phosphate transporter 3 (538 aa).

Topologically, residues 1–24 (MAKDQLQVLNALDVAKTQLYHFTA) are cytoplasmic. Residues 25-45 (IVIAGMGFFTDAYDLFCISLV) form a helical membrane-spanning segment. At 46 to 70 (TKLLGRIYYFHEGAPKPGILPSGIS) the chain is on the extracellular side. A helical membrane pass occupies residues 71–91 (AAVNGVAFIGTLSGQLFFGWL). The Cytoplasmic segment spans residues 92 to 99 (GDKLGRKK). Residues 100-120 (VYGMTLMLMVICSIACGLSFG) traverse the membrane as a helical segment. Residues 121-122 (KT) lie on the Extracellular side of the membrane. Residues 123 to 143 (ANGVIATLCFFRFWLGFGIGG) traverse the membrane as a helical segment. At 144 to 164 (DYPLSATIMSEYANKKTRGAF) the chain is on the cytoplasmic side. The helical transmembrane segment at 165-185 (IAAVFAMQGFGILAGGIVALI) threads the bilayer. Residues 186 to 211 (VSAGFKNAYPAPTYSAHGKDSTPPEA) are Extracellular-facing. A helical transmembrane segment spans residues 212–232 (DYVWRIIVMIGALPALLTYYW). Residues 233 to 292 (RMKMPETARYTALVAKNTVKAAADMSKVLNVEIEEDKATVEKIEENGNSFGLFSKEFLRR) are Cytoplasmic-facing. The helical transmembrane segment at 293-313 (HGLHLLGTTSTWFLLDIAFYS) threads the bilayer. At 314-345 (QNLFQKDIFSKIGWIPPPETMNALDEVFRIAR) the chain is on the extracellular side. A helical membrane pass occupies residues 346–366 (AQTLIALCSTVPGYWFTVAFI). Topologically, residues 367–371 (DKMGR) are cytoplasmic. A helical transmembrane segment spans residues 372-392 (FAIQLMGSFFMTVFMFALAIP). Topologically, residues 393-402 (YDHWTKKENR) are extracellular. A helical transmembrane segment spans residues 403 to 423 (IGFVIMYSLTFFFANFGPNAT). Over 424-442 (TFVVPAEIFPARLRSTCHG) the chain is Cytoplasmic. A helical membrane pass occupies residues 443-463 (ISAAAGKAGAIVGAFGFLYAA). Residues 464-483 (QSTDPKKVDAGYPTGIGVKN) are Extracellular-facing. A helical transmembrane segment spans residues 484–504 (ALIVLGCVNFLGMLSTLLVPE). Over 505–538 (SKGKSLEEMSKENEGEEENYGTETKGENAQTVPV) the chain is Cytoplasmic. Basic and acidic residues predominate over residues 506–517 (KGKSLEEMSKEN). The interval 506–538 (KGKSLEEMSKENEGEEENYGTETKGENAQTVPV) is disordered.

This sequence belongs to the major facilitator superfamily. Phosphate:H(+) symporter (TC 2.A.1.9) family. In terms of tissue distribution, expressed at low levels in non-mycorrhized roots.

The protein resides in the cell membrane. It catalyses the reaction phosphate(in) + H(+)(in) = phosphate(out) + H(+)(out). Functionally, low-affinity transporter for external inorganic phosphate (Pi) probably involved in the acquisition of phosphate released by arbuscular mycorrhizal (AM) fungi during AM symbiosis. This is Low affinity inorganic phosphate transporter 3 from Petunia hybrida (Petunia).